Reading from the N-terminus, the 109-residue chain is Large ribosomal subunit protein uL23 (109 aa).

Belongs to the universal ribosomal protein uL23 family. As to quaternary structure, part of the 50S ribosomal subunit. Contacts protein L29, and trigger factor when it is bound to the ribosome.

One of the early assembly proteins it binds 23S rRNA. One of the proteins that surrounds the polypeptide exit tunnel on the outside of the ribosome. Forms the main docking site for trigger factor binding to the ribosome. The polypeptide is Large ribosomal subunit protein uL23 (Chlorobium phaeobacteroides (strain BS1)).